The chain runs to 177 residues: Large ribosomal subunit protein uL6 (177 aa).

It belongs to the universal ribosomal protein uL6 family. As to quaternary structure, part of the 50S ribosomal subunit.

Its function is as follows. This protein binds to the 23S rRNA, and is important in its secondary structure. It is located near the subunit interface in the base of the L7/L12 stalk, and near the tRNA binding site of the peptidyltransferase center. The polypeptide is Large ribosomal subunit protein uL6 (Pseudomonas syringae pv. syringae (strain B728a)).